The primary structure comprises 1282 residues: Clustered mitochondria protein homolog (1282 aa).

Positions 1-50 (MADASQATTPAAEGNPVPEVPETQTPPADVNGTTEQEQTEEGAEQALEDQ) are disordered. A compositionally biased stretch (low complexity) spans 16-36 (PVPEVPETQTPPADVNGTTEQ). Over residues 37–47 (EQTEEGAEQAL) the composition is skewed to acidic residues. The Clu domain occupies 331-575 (DNTRSQETYL…RITPLDIAWM (245 aa)). A coiled-coil region spans residues 623–650 (EEKKEGEEATEEAKTEEIKTEEAEKSEE). Basic and acidic residues-rich tracts occupy residues 624–661 (EKKE…KTEE) and 668–680 (VAEK…AKED). 2 disordered regions span residues 624–680 (EKKE…AKED) and 913–945 (PVAE…TSPV). TPR repeat units lie at residues 1021–1054 (AQMY…AERT), 1063–1096 (VLNY…WKVI), and 1105–1138 (ITTM…CNKV). The tract at residues 1257–1282 (VENSEKKKGGKKSKGPSNPKKRGGKA) is disordered. A compositionally biased stretch (basic residues) spans 1264–1282 (KGGKKSKGPSNPKKRGGKA).

Belongs to the CLU family. In terms of assembly, may associate with the eukaryotic translation initiation factor 3 (eIF-3) complex.

The protein resides in the cytoplasm. MRNA-binding protein involved in proper cytoplasmic distribution of mitochondria. The protein is Clustered mitochondria protein homolog of Neurospora crassa (strain ATCC 24698 / 74-OR23-1A / CBS 708.71 / DSM 1257 / FGSC 987).